The sequence spans 213 residues: Glycerol-3-phosphate acyltransferase (213 aa).

6 helical membrane passes run 3-23 (IIIL…GLWI), 48-68 (ILGV…GTLA), 71-91 (LPLI…LAVI), 119-139 (PFFL…FSMI), 144-164 (VVAA…GFIL), and 165-185 (TSYD…IIFR).

Belongs to the PlsY family. In terms of assembly, probably interacts with PlsX.

The protein resides in the cell membrane. The catalysed reaction is an acyl phosphate + sn-glycerol 3-phosphate = a 1-acyl-sn-glycero-3-phosphate + phosphate. The protein operates within lipid metabolism; phospholipid metabolism. Its function is as follows. Catalyzes the transfer of an acyl group from acyl-phosphate (acyl-PO(4)) to glycerol-3-phosphate (G3P) to form lysophosphatidic acid (LPA). This enzyme utilizes acyl-phosphate as fatty acyl donor, but not acyl-CoA or acyl-ACP. The polypeptide is Glycerol-3-phosphate acyltransferase (Lactococcus lactis subsp. cremoris (strain SK11)).